We begin with the raw amino-acid sequence, 182 residues long: Large ribosomal subunit protein uL5 (182 aa).

Belongs to the universal ribosomal protein uL5 family. Part of the 50S ribosomal subunit; part of the 5S rRNA/L5/L18/L25 subcomplex. Contacts the 5S rRNA and the P site tRNA. Forms a bridge to the 30S subunit in the 70S ribosome.

This is one of the proteins that bind and probably mediate the attachment of the 5S RNA into the large ribosomal subunit, where it forms part of the central protuberance. In the 70S ribosome it contacts protein S13 of the 30S subunit (bridge B1b), connecting the 2 subunits; this bridge is implicated in subunit movement. Contacts the P site tRNA; the 5S rRNA and some of its associated proteins might help stabilize positioning of ribosome-bound tRNAs. In Borreliella afzelii (strain PKo) (Borrelia afzelii), this protein is Large ribosomal subunit protein uL5.